The chain runs to 1641 residues: Vitellogenin-1 (1641 aa).

Residues methionine 1 to alanine 18 form the signal peptide. Positions tryptophan 19–serine 790 constitute a Vitellogenin domain. Cysteine 172 and cysteine 211 form a disulfide bridge. Positions leucine 322–alanine 334 are enriched in polar residues. Positions leucine 322–glutamate 372 are disordered. The segment covering glutamate 342–serine 351 has biased composition (basic and acidic residues). N-linked (GlcNAc...) asparagine glycans are attached at residues asparagine 344, asparagine 549, asparagine 566, asparagine 831, asparagine 875, asparagine 898, asparagine 1001, asparagine 1053, asparagine 1268, asparagine 1393, asparagine 1396, asparagine 1505, and asparagine 1523. Positions glutamate 1410–glutamine 1597 constitute a VWFD domain. A disulfide bond links cysteine 1435 and cysteine 1596. Residues glutamate 1594–histidine 1641 form a disordered region.

Hemolymph.

The protein localises to the secreted. Its function is as follows. Precursor of the egg-yolk proteins that are sources of nutrients during embryonic development. This Solenopsis invicta (Red imported fire ant) protein is Vitellogenin-1.